The sequence spans 650 residues: 1-deoxy-D-xylulose-5-phosphate synthase (650 aa).

Residues His-87 and 128–130 each bind thiamine diphosphate; that span reads GHS. Asp-159 provides a ligand contact to Mg(2+). Thiamine diphosphate is bound by residues 160 to 161, Asn-188, Tyr-299, and Glu-383; that span reads GS. Mg(2+) is bound at residue Asn-188.

This sequence belongs to the transketolase family. DXPS subfamily. In terms of assembly, homodimer. It depends on Mg(2+) as a cofactor. The cofactor is thiamine diphosphate.

The catalysed reaction is D-glyceraldehyde 3-phosphate + pyruvate + H(+) = 1-deoxy-D-xylulose 5-phosphate + CO2. Its pathway is metabolic intermediate biosynthesis; 1-deoxy-D-xylulose 5-phosphate biosynthesis; 1-deoxy-D-xylulose 5-phosphate from D-glyceraldehyde 3-phosphate and pyruvate: step 1/1. Catalyzes the acyloin condensation reaction between C atoms 2 and 3 of pyruvate and glyceraldehyde 3-phosphate to yield 1-deoxy-D-xylulose-5-phosphate (DXP). The protein is 1-deoxy-D-xylulose-5-phosphate synthase of Syntrophus aciditrophicus (strain SB).